The chain runs to 81 residues: Photosystem I iron-sulfur center (81 aa).

2 4Fe-4S ferredoxin-type domains span residues 2–31 (AHSV…MVPW) and 39–68 (IASA…VRVY). [4Fe-4S] cluster is bound by residues Cys-11, Cys-14, Cys-17, Cys-21, Cys-48, Cys-51, Cys-54, and Cys-58.

In terms of assembly, the eukaryotic PSI reaction center is composed of at least 11 subunits. [4Fe-4S] cluster serves as cofactor.

The protein resides in the plastid. It localises to the chloroplast thylakoid membrane. It carries out the reaction reduced [plastocyanin] + hnu + oxidized [2Fe-2S]-[ferredoxin] = oxidized [plastocyanin] + reduced [2Fe-2S]-[ferredoxin]. In terms of biological role, apoprotein for the two 4Fe-4S centers FA and FB of photosystem I (PSI); essential for photochemical activity. FB is the terminal electron acceptor of PSI, donating electrons to ferredoxin. The C-terminus interacts with PsaA/B/D and helps assemble the protein into the PSI complex. Required for binding of PsaD and PsaE to PSI. PSI is a plastocyanin-ferredoxin oxidoreductase, converting photonic excitation into a charge separation, which transfers an electron from the donor P700 chlorophyll pair to the spectroscopically characterized acceptors A0, A1, FX, FA and FB in turn. The chain is Photosystem I iron-sulfur center from Gnetum gnemon (Spanish joint-fir).